The following is a 448-amino-acid chain: Damage-control phosphatase ARMT1 (448 aa).

Mn(2+) is bound by residues Asp-257 and Asn-258. A substrate-binding site is contributed by 257–258; it reads DN. Positions 262 and 295 each coordinate S-adenosyl-L-methionine. A Mn(2+)-binding site is contributed by Asp-295. Residues 371-375 and Lys-408 contribute to the substrate site; that span reads DLNYR. The short motif at 405–408 is the Subfamily III RTxK motif element; sequence RTLK.

The protein belongs to the damage-control phosphatase family. Sugar phosphate phosphatase III subfamily. The cofactor is Mn(2+). It depends on Ni(2+) as a cofactor. Automethylated.

The enzyme catalyses beta-D-fructose 1-phosphate + H2O = D-fructose + phosphate. The catalysed reaction is beta-D-fructose 6-phosphate = dihydroxyacetone + D-glyceraldehyde 3-phosphate. It catalyses the reaction L-glutamyl-[protein] + S-adenosyl-L-methionine = [protein]-L-glutamate 5-O-methyl ester + S-adenosyl-L-homocysteine. Its function is as follows. Metal-dependent phosphatase that shows phosphatase activity against several substrates, including fructose-1-phosphate and fructose-6-phosphate. Its preference for fructose-1-phosphate, a strong glycating agent that causes DNA damage rather than a canonical yeast metabolite, suggests a damage-control function in hexose phosphate metabolism. Has also been shown to have O-methyltransferase activity that methylates glutamate residues of target proteins to form gamma-glutamyl methyl ester residues. Possibly methylates PCNA, suggesting it is involved in the DNA damage response. In Danio rerio (Zebrafish), this protein is Damage-control phosphatase ARMT1.